Consider the following 409-residue polypeptide: Spermatogenesis-associated protein 2-like protein (409 aa).

Disordered regions lie at residues 233–257 (EDEG…TSEL), 270–299 (LWGA…PQPE), and 313–337 (RPGD…IPEP).

This sequence belongs to the SPATA2 family.

This is Spermatogenesis-associated protein 2-like protein (SPATA2L) from Bos taurus (Bovine).